The primary structure comprises 369 residues: Phospho-N-acetylmuramoyl-pentapeptide-transferase (369 aa).

10 helical membrane passes run 2 to 22 (IALL…TPLF), 55 to 75 (TVVV…MFLM), 86 to 106 (ALIL…DDFI), 120 to 140 (AKLI…LNFP), 163 to 183 (LAFG…NLIV), 196 to 216 (LDGL…LMGI), 239 to 259 (PLDL…FLWW), 266 to 286 (IFMG…FAIL), 291 to 311 (LLLG…IIQV), and 348 to 368 (ILGG…WVVL).

This sequence belongs to the glycosyltransferase 4 family. MraY subfamily. Mg(2+) is required as a cofactor.

Its subcellular location is the cell membrane. It catalyses the reaction UDP-N-acetyl-alpha-D-muramoyl-L-alanyl-gamma-D-glutamyl-meso-2,6-diaminopimeloyl-D-alanyl-D-alanine + di-trans,octa-cis-undecaprenyl phosphate = di-trans,octa-cis-undecaprenyl diphospho-N-acetyl-alpha-D-muramoyl-L-alanyl-D-glutamyl-meso-2,6-diaminopimeloyl-D-alanyl-D-alanine + UMP. It functions in the pathway cell wall biogenesis; peptidoglycan biosynthesis. Catalyzes the initial step of the lipid cycle reactions in the biosynthesis of the cell wall peptidoglycan: transfers peptidoglycan precursor phospho-MurNAc-pentapeptide from UDP-MurNAc-pentapeptide onto the lipid carrier undecaprenyl phosphate, yielding undecaprenyl-pyrophosphoryl-MurNAc-pentapeptide, known as lipid I. This Pseudarthrobacter chlorophenolicus (strain ATCC 700700 / DSM 12829 / CIP 107037 / JCM 12360 / KCTC 9906 / NCIMB 13794 / A6) (Arthrobacter chlorophenolicus) protein is Phospho-N-acetylmuramoyl-pentapeptide-transferase.